Consider the following 320-residue polypeptide: Aminoacyl tRNA synthase complex-interacting multifunctional protein 2 (320 aa).

Ser36 carries the post-translational modification Phosphoserine. The interaction with PRKN stretch occupies residues Thr82–Pro162. Residues Pro162–Gln225 are interaction with TP53. One can recognise a GST C-terminal domain in the interval Leu220–Lys317.

Part of the multisynthetase complex (MSC), a multisubunit complex that groups tRNA ligases for Arg (RARS1), Asp (DARS1), Gln (QARS1), Ile (IARS1), Leu (LARS1), Lys (KARS1), Met (MARS1) the bifunctional ligase for Glu and Pro (EPRS1) and the auxiliary subunits AIMP1/p43, AIMP2/p38 and EEF1E1/p18. Interacts (via N-terminus) with KARS1. Interacts with EPRS1. Forms a linear complex that contains MARS1, EEF1E1, EPRS1 and AIMP2 that is at the core of the multisubunit complex. Binds FUBP1 (via C-terminus). Interacts in both its unphosphorylated and phosphorylated forms with p53/TP53 (via N-terminus) in the nucleus following UV irradiation. Interacts (via N-terminus) with PRKN/parkin (via first RING-type domain). Interacts with TARS3. Post-translationally, phosphorylated on serine residues in response to UV irradiation. In terms of processing, ubiquitinated by PRKN, leading to its degradation by the proteasome.

The protein localises to the cytoplasm. Its subcellular location is the cytosol. It localises to the nucleus. Functionally, required for assembly and stability of the aminoacyl-tRNA synthase complex. Mediates ubiquitination and degradation of FUBP1, a transcriptional activator of MYC, leading to MYC down-regulation which is required for aveolar type II cell differentiation. Blocks MDM2-mediated ubiquitination and degradation of p53/TP53. Functions as a proapoptotic factor. The polypeptide is Aminoacyl tRNA synthase complex-interacting multifunctional protein 2 (AIMP2) (Bos taurus (Bovine)).